Reading from the N-terminus, the 550-residue chain is Centrosomal and chromosomal factor (550 aa).

Coiled-coil stretches lie at residues 20–44, 105–126, and 239–274; these read SALS…QQHH, VANS…QQQQ, and ATSA…QQAH. Disordered regions lie at residues 21 to 145, 208 to 320, 361 to 380, and 392 to 465; these read ALSA…KDYS, LSSG…HAAN, SHYA…RDAM, and SGKL…SASV. 3 stretches are compositionally biased toward low complexity: residues 24–71, 81–136, and 221–320; these read ALQQ…QQQQ, ANTS…NAAP, and AAVA…HAAN. Composition is skewed to low complexity over residues 396–412 and 450–462; these read QQSQ…QQHC and SATP…SGGS.

In terms of assembly, homodimer. Interacts with esc, Trl, E(z), scm and ph-p in vitro. Found in vivo in an esc-containing complex, which may be the Esc/E(z) complex. Also found in vivo in a Pc-containing complex that may be the PRC1 complex, but does not interact with Pc directly. Interacts with cyclin CycG.

It is found in the nucleus. It localises to the cytoplasm. Its subcellular location is the cytoskeleton. The protein localises to the microtubule organizing center. The protein resides in the centrosome. It is found in the chromosome. Its function is as follows. Essential protein required for proper condensation of mitotic chromosomes and progression through mitosis. Binds to specific polytene chromosome sites, many of which are shared with the posterior sex combs (Psc) protein. Involved in maintaining Abd-B repression outside its normal expression domain. This chain is Centrosomal and chromosomal factor (corto), found in Drosophila melanogaster (Fruit fly).